The sequence spans 343 residues: L-threonine 3-dehydrogenase (343 aa).

C38 serves as a coordination point for Zn(2+). Catalysis depends on charge relay system residues T40 and H43. Zn(2+)-binding residues include H63, E64, C93, C96, C99, and C107. NAD(+)-binding positions include I175, D195, R200, 262-264, and 286-287; these read LGI and IY.

It belongs to the zinc-containing alcohol dehydrogenase family. In terms of assembly, homotetramer. The cofactor is Zn(2+).

It localises to the cytoplasm. It catalyses the reaction L-threonine + NAD(+) = (2S)-2-amino-3-oxobutanoate + NADH + H(+). Its pathway is amino-acid degradation; L-threonine degradation via oxydo-reductase pathway; glycine from L-threonine: step 1/2. In terms of biological role, catalyzes the NAD(+)-dependent oxidation of L-threonine to 2-amino-3-ketobutyrate. In Pectobacterium carotovorum subsp. carotovorum (strain PC1), this protein is L-threonine 3-dehydrogenase.